We begin with the raw amino-acid sequence, 103 residues long: Sperm-associated antigen 11B (103 aa).

The first 25 residues, 1–25, serve as a signal peptide directing secretion; it reads MRQRLLPSVTSLLLVALLFPGSSQA. N-linked (GlcNAc...) asparagine glycosylation is present at N29.

This sequence belongs to the SPAG11 family. As to expression, specifically expressed in caput and proximal corpus of epididymis (at protein level). Present in the epididymal epithelium and on the sperm surface, with a subacrosomal equatorial distribution on the sperm head (at protein level).

It localises to the secreted. Has antimicrobial activity against E.coli. Plays a role in the defense response in the male reproductive tract, contributing to sperm maturation, storage and protection. This is Sperm-associated antigen 11B from Homo sapiens (Human).